A 236-amino-acid polypeptide reads, in one-letter code: Large ribosomal subunit protein uL3 (236 aa).

The protein belongs to the universal ribosomal protein uL3 family. Part of the 50S ribosomal subunit. Forms a cluster with proteins L14 and L19.

Functionally, one of the primary rRNA binding proteins, it binds directly near the 3'-end of the 23S rRNA, where it nucleates assembly of the 50S subunit. The polypeptide is Large ribosomal subunit protein uL3 (Anaeromyxobacter dehalogenans (strain 2CP-C)).